The primary structure comprises 498 residues: Alpha-amylase A (498 aa).

Positions 1–21 (MMVAWWSLFLYGLQVAAPALA) are cleaved as a signal peptide. A disulfide bridge connects residues cysteine 51 and cysteine 59. Residues glutamine 56 and tryptophan 104 each coordinate substrate. Residue asparagine 142 participates in Ca(2+) binding. Position 143 (histidine 143) interacts with substrate. The cysteines at positions 171 and 185 are disulfide-linked. Glutamate 183 and aspartate 196 together coordinate Ca(2+). N-linked (GlcNAc...) asparagine glycosylation occurs at asparagine 218. Arginine 225 serves as a coordination point for substrate. Residues aspartate 227, histidine 231, and glutamate 251 each coordinate Ca(2+). Catalysis depends on aspartate 227, which acts as the Nucleophile. A substrate-binding site is contributed by 230 to 231 (KH). The active-site Proton donor is the glutamate 251. Glycine 255 serves as a coordination point for substrate. Cysteine 261 and cysteine 304 are oxidised to a cystine. Substrate contacts are provided by aspartate 318 and arginine 365. Residues cysteine 461 and cysteine 496 are joined by a disulfide bond.

The protein belongs to the glycosyl hydrolase 13 family. Ca(2+) serves as cofactor.

It carries out the reaction Endohydrolysis of (1-&gt;4)-alpha-D-glucosidic linkages in polysaccharides containing three or more (1-&gt;4)-alpha-linked D-glucose units.. This chain is Alpha-amylase A (amyA), found in Aspergillus awamori (Black koji mold).